Here is a 195-residue protein sequence, read N- to C-terminus: Ribonuclease HII (195 aa).

The 188-residue stretch at 8 to 195 folds into the RNase H type-2 domain; the sequence is WGVVGVDEAG…FAPVRRLLGG (188 aa). The a divalent metal cation site is built by Asp-14, Glu-15, and Asp-106.

This sequence belongs to the RNase HII family. Mn(2+) is required as a cofactor. It depends on Mg(2+) as a cofactor.

It is found in the cytoplasm. The enzyme catalyses Endonucleolytic cleavage to 5'-phosphomonoester.. Endonuclease that specifically degrades the RNA of RNA-DNA hybrids. The chain is Ribonuclease HII from Halorhodospira halophila (strain DSM 244 / SL1) (Ectothiorhodospira halophila (strain DSM 244 / SL1)).